The chain runs to 168 residues: ATP synthase subunit b (168 aa).

The chain crosses the membrane as a helical span at residues 9–29; that stretch reads SIPFGTIAYTLFIFLLLLVML.

This sequence belongs to the ATPase B chain family. As to quaternary structure, F-type ATPases have 2 components, F(1) - the catalytic core - and F(0) - the membrane proton channel. F(1) has five subunits: alpha(3), beta(3), gamma(1), delta(1), epsilon(1). F(0) has three main subunits: a(1), b(2) and c(10-14). The alpha and beta chains form an alternating ring which encloses part of the gamma chain. F(1) is attached to F(0) by a central stalk formed by the gamma and epsilon chains, while a peripheral stalk is formed by the delta and b chains.

It is found in the cell membrane. In terms of biological role, f(1)F(0) ATP synthase produces ATP from ADP in the presence of a proton or sodium gradient. F-type ATPases consist of two structural domains, F(1) containing the extramembraneous catalytic core and F(0) containing the membrane proton channel, linked together by a central stalk and a peripheral stalk. During catalysis, ATP synthesis in the catalytic domain of F(1) is coupled via a rotary mechanism of the central stalk subunits to proton translocation. Component of the F(0) channel, it forms part of the peripheral stalk, linking F(1) to F(0). In Bacillus mycoides (strain KBAB4) (Bacillus weihenstephanensis), this protein is ATP synthase subunit b.